The chain runs to 320 residues: GTPase Era (320 aa).

In terms of domain architecture, Era-type G spans 25-193 (HCGFIAIVGR…RKHVRNHLPK (169 aa)). Residues 33-40 (GRPNVGKS) form a G1 region. 33-40 (GRPNVGKS) contacts GTP. The G2 stretch occupies residues 59–63 (QTTRH). The tract at residues 80–83 (DTPG) is G3. GTP-binding positions include 80 to 84 (DTPGL) and 142 to 145 (NKVD). A G4 region spans residues 142–145 (NKVD). Positions 172-174 (ISA) are G5. The KH type-2 domain occupies 216–302 (VREKLMRFTG…YLETWVKVKS (87 aa)).

Belongs to the TRAFAC class TrmE-Era-EngA-EngB-Septin-like GTPase superfamily. Era GTPase family. In terms of assembly, monomer.

The protein resides in the cytoplasm. Its subcellular location is the cell inner membrane. In terms of biological role, an essential GTPase that binds both GDP and GTP, with rapid nucleotide exchange. Plays a role in 16S rRNA processing and 30S ribosomal subunit biogenesis and possibly also in cell cycle regulation and energy metabolism. This chain is GTPase Era, found in Vibrio parahaemolyticus serotype O3:K6 (strain RIMD 2210633).